Here is a 585-residue protein sequence, read N- to C-terminus: Arginine--tRNA ligase (585 aa).

Positions 131–141 match the 'HIGH' region motif; it reads ANPTGPMHVGH.

The protein belongs to the class-I aminoacyl-tRNA synthetase family. Monomer.

The protein localises to the cytoplasm. The catalysed reaction is tRNA(Arg) + L-arginine + ATP = L-arginyl-tRNA(Arg) + AMP + diphosphate. This is Arginine--tRNA ligase from Rhizobium leguminosarum bv. trifolii (strain WSM2304).